The following is a 363-amino-acid chain: Anhydro-N-acetylmuramic acid kinase (363 aa).

10-17 is an ATP binding site; that stretch reads GTSLDGLD.

It belongs to the anhydro-N-acetylmuramic acid kinase family.

The enzyme catalyses 1,6-anhydro-N-acetyl-beta-muramate + ATP + H2O = N-acetyl-D-muramate 6-phosphate + ADP + H(+). It functions in the pathway amino-sugar metabolism; 1,6-anhydro-N-acetylmuramate degradation. It participates in cell wall biogenesis; peptidoglycan recycling. Catalyzes the specific phosphorylation of 1,6-anhydro-N-acetylmuramic acid (anhMurNAc) with the simultaneous cleavage of the 1,6-anhydro ring, generating MurNAc-6-P. Is required for the utilization of anhMurNAc either imported from the medium or derived from its own cell wall murein, and thus plays a role in cell wall recycling. This Pseudomonas fluorescens (strain Pf0-1) protein is Anhydro-N-acetylmuramic acid kinase.